Here is a 126-residue protein sequence, read N- to C-terminus: Large ribosomal subunit protein bL12 (126 aa).

Belongs to the bacterial ribosomal protein bL12 family. As to quaternary structure, homodimer. Part of the ribosomal stalk of the 50S ribosomal subunit. Forms a multimeric L10(L12)X complex, where L10 forms an elongated spine to which 2 to 4 L12 dimers bind in a sequential fashion. Binds GTP-bound translation factors.

Forms part of the ribosomal stalk which helps the ribosome interact with GTP-bound translation factors. Is thus essential for accurate translation. This chain is Large ribosomal subunit protein bL12, found in Elusimicrobium minutum (strain Pei191).